We begin with the raw amino-acid sequence, 209 residues long: 8-oxoguanine DNA glycosylase/AP lyase (209 aa).

Catalysis depends on residues Lys-131 and Asp-149.

This sequence belongs to the type-2 OGG1 family.

The enzyme catalyses 2'-deoxyribonucleotide-(2'-deoxyribose 5'-phosphate)-2'-deoxyribonucleotide-DNA = a 3'-end 2'-deoxyribonucleotide-(2,3-dehydro-2,3-deoxyribose 5'-phosphate)-DNA + a 5'-end 5'-phospho-2'-deoxyribonucleoside-DNA + H(+). Functionally, catalyzes the excision of an oxidatively damaged form of guanine (7,8-dihydro-8-oxoguanine = 8-oxoG) from DNA. Also cleaves the DNA backbone at apurinic/apyrimidinic sites (AP sites). This chain is 8-oxoguanine DNA glycosylase/AP lyase, found in Korarchaeum cryptofilum (strain OPF8).